Reading from the N-terminus, the 980-residue chain is Valine--tRNA ligase (980 aa).

The short motif at proline 43 to histidine 53 is the 'HIGH' region element. Positions lysine 586–serine 590 match the 'KMSKS' region motif. Lysine 589 contributes to the ATP binding site. Residues leucine 914 to alanine 978 are a coiled coil.

Belongs to the class-I aminoacyl-tRNA synthetase family. ValS type 1 subfamily. Monomer.

Its subcellular location is the cytoplasm. The catalysed reaction is tRNA(Val) + L-valine + ATP = L-valyl-tRNA(Val) + AMP + diphosphate. Functionally, catalyzes the attachment of valine to tRNA(Val). As ValRS can inadvertently accommodate and process structurally similar amino acids such as threonine, to avoid such errors, it has a 'posttransfer' editing activity that hydrolyzes mischarged Thr-tRNA(Val) in a tRNA-dependent manner. In Xanthomonas euvesicatoria pv. vesicatoria (strain 85-10) (Xanthomonas campestris pv. vesicatoria), this protein is Valine--tRNA ligase.